Consider the following 296-residue polypeptide: Complex I intermediate-associated protein 30, mitochondrial (296 aa).

The N-terminal 29 residues, 1–29 (MNSLLRQGLRLGCCLPAVQQQIHTTAVHR), are a transit peptide targeting the mitochondrion.

Belongs to the CIA30 family. As to quaternary structure, associates with mitochondrial complex I assembly intermediates during its biogenesis.

The protein localises to the mitochondrion. Chaperone protein involved in the assembly of the mitochondrial NADH:ubiquinone oxidoreductase complex (complex I). The sequence is that of Complex I intermediate-associated protein 30, mitochondrial from Drosophila melanogaster (Fruit fly).